Here is a 262-residue protein sequence, read N- to C-terminus: Putative hydro-lyase ROP_32680 (262 aa).

It belongs to the D-glutamate cyclase family.

This is Putative hydro-lyase ROP_32680 from Rhodococcus opacus (strain B4).